The following is a 97-amino-acid chain: Coiled-coil domain-containing protein 167 (97 aa).

Positions 10–79 form a coiled coil; it reads GVALEIDGLE…LRQENRKNML (70 aa). Residues 77–97 form a helical membrane-spanning segment; the sequence is NMLLSVAIFLLLTVIYAYWAL.

The protein resides in the membrane. In Bos taurus (Bovine), this protein is Coiled-coil domain-containing protein 167 (CCDC167).